Reading from the N-terminus, the 536-residue chain is SNW domain-containing protein 1 (536 aa).

Positions 1–46 (MALTSFLPAPTQLSQDQLEAEEKARSQRSRQTSLVSSRREPPPYGY) are disordered. Ala-2 carries the N-acetylalanine modification. Ser-14 bears the Phosphoserine mark. Lys-23 is covalently cross-linked (Glycyl lysine isopeptide (Lys-Gly) (interchain with G-Cter in SUMO2)). The tract at residues 59 to 79 (GDGGAFPEIHVAQYPLDMGRK) is interaction with PPIL1. Glycyl lysine isopeptide (Lys-Gly) (interchain with G-Cter in SUMO2) cross-links involve residues Lys-81, Lys-97, Lys-115, Lys-122, Lys-141, Lys-158, and Lys-170. Residues 174-339 (AQYIRYTPSQ…KARERRAGIK (166 aa)) are SNW. 2 positions are modified to phosphoserine: Ser-182 and Ser-190. Residue Lys-193 forms a Glycyl lysine isopeptide (Lys-Gly) (interchain with G-Cter in SUMO2) linkage. Residues 209–233 (PPRFKINKKIPRGPPSPPAPVMHSP) are disordered. Phosphoserine is present on residues Ser-224, Ser-232, and Ser-234. Residues Lys-240, Lys-258, Lys-286, Lys-339, Lys-344, Lys-416, Lys-441, and Lys-452 each participate in a glycyl lysine isopeptide (Lys-Gly) (interchain with G-Cter in SUMO2) cross-link. The disordered stretch occupies residues 311-386 (KMAQKEKEKH…RSKLQRNENR (76 aa)). Composition is skewed to basic and acidic residues over residues 472–489 (FVPDKEFSGSDRRQRGRE) and 503–530 (KFLEEAKQHGGSKRPSDSSRPKEHEHEG). Residues 472 to 536 (FVPDKEFSGS…EHEGKKRRKE (65 aa)) are disordered. Residues Ser-479 and Ser-481 each carry the phosphoserine modification. Lys-509 participates in a covalent cross-link: Glycyl lysine isopeptide (Lys-Gly) (interchain with G-Cter in SUMO2).

Belongs to the SNW family. As to quaternary structure, identified in the spliceosome C complex. Associates with U4/U6-U5 tri-small nuclear ribonucleoproteins (U4/U6-U5 tri-snRNPs). Component of the minor spliceosome, which splices U12-type introns. Interacts with SKI, SMAD2,SMAD3, RBPJ, RB1, PABPN1, MAGEA1, SIRT1, FOXN3, U2AF2, PPIL1, DAXX and ATP1B4. Interacts with VDR and RXRA; preferentially associates with VDR:RXRA heterodimers. Interacts with NCOR2. Interacts with MAML1. Interacts with NOTCH1 NICD; the interaction involves multimerized NOTCH1 NICD. Forms a complex with NOTCH1 NICD and MAML1; the association is dissociated by RBPJ. Associates with positive transcription elongation factor b (P-TEFb). Component of the SNARP complex which consists at least of SNIP1, SNW1, THRAP3, BCLAF1 and PNN.

The protein localises to the nucleus. In terms of biological role, involved in pre-mRNA splicing as component of the spliceosome. As a component of the minor spliceosome, involved in the splicing of U12-type introns in pre-mRNAs. Required in the specific splicing of CDKN1A pre-mRNA; the function probably involves the recruitment of U2AF2 to the mRNA. May recruit PPIL1 to the spliceosome. May be involved in cyclin-D1/CCND1 mRNA stability through the SNARP complex which associates with both the 3'end of the CCND1 gene and its mRNA. Involved in transcriptional regulation. Modulates TGF-beta-mediated transcription via association with SMAD proteins, MYOD1-mediated transcription via association with PABPN1, RB1-mediated transcriptional repression, and retinoid-X receptor (RXR)- and vitamin D receptor (VDR)-dependent gene transcription in a cell line-specific manner probably involving coactivators NCOA1 and GRIP1. Is involved in NOTCH1-mediated transcriptional activation. Binds to multimerized forms of Notch intracellular domain (NICD) and is proposed to recruit transcriptional coactivators such as MAML1 to form an intermediate preactivation complex which associates with DNA-bound CBF-1/RBPJ to form a transcriptional activation complex by releasing SNW1 and redundant NOTCH1 NICD. In Bos taurus (Bovine), this protein is SNW domain-containing protein 1 (SNW1).